We begin with the raw amino-acid sequence, 121 residues long: Large ribosomal subunit protein uL22 (121 aa).

Belongs to the universal ribosomal protein uL22 family. As to quaternary structure, part of the 50S ribosomal subunit.

This protein binds specifically to 23S rRNA; its binding is stimulated by other ribosomal proteins, e.g. L4, L17, and L20. It is important during the early stages of 50S assembly. It makes multiple contacts with different domains of the 23S rRNA in the assembled 50S subunit and ribosome. In terms of biological role, the globular domain of the protein is located near the polypeptide exit tunnel on the outside of the subunit, while an extended beta-hairpin is found that lines the wall of the exit tunnel in the center of the 70S ribosome. In Synechococcus sp. (strain CC9311), this protein is Large ribosomal subunit protein uL22.